The sequence spans 409 residues: Dipeptidase 1 (409 aa).

The N-terminal stretch at 1 to 16 (MWTSWWLWPLVAVCAA) is a signal peptide. The Zn(2+) site is built by histidine 36 and aspartate 38. Asparagine 57 carries an N-linked (GlcNAc...) asparagine glycan. Cysteine 87 and cysteine 170 are joined by a disulfide. Glutamate 141 lines the Zn(2+) pocket. Histidine 168 contacts substrate. 2 residues coordinate Zn(2+): histidine 214 and histidine 235. A disulfide bridge connects residues cysteine 242 and cysteine 274. A substrate-binding site is contributed by arginine 246. Asparagine 279 is a glycosylation site (N-linked (GlcNAc...) asparagine). Aspartate 304 contacts substrate. Serine 384 is lipidated: GPI-anchor amidated serine. A propeptide spans 385–409 (AAPSLHLPPGSLLASLVPLLLLSLP) (removed in mature form).

The protein belongs to the metallo-dependent hydrolases superfamily. Peptidase M19 family. Homodimer; disulfide-linked. It depends on Zn(2+) as a cofactor.

It localises to the apical cell membrane. The protein localises to the cell projection. It is found in the microvillus membrane. Its subcellular location is the cell membrane. The catalysed reaction is an L-aminoacyl-L-amino acid + H2O = 2 an L-alpha-amino acid. The enzyme catalyses leukotriene D4 + H2O = leukotriene E4 + glycine. It catalyses the reaction L-cystine-bis-glycine + 2 H2O = L-cystine + 2 glycine. It carries out the reaction a beta-lactam + H2O = a substituted beta-amino acid. The catalysed reaction is glycyldehydrophenylalanine + H2O = 2,3-didehydrophenylalanine + glycine. Its activity is regulated as follows. Inhibited by L-penicillamine. Inhibited by cilastatin. Hydrolyzes a wide range of dipeptides. Hydrolyzes the conversion of leukotriene D4 to leukotriene E4. Hydrolyzes cystinyl-bis-glycine (cys-bis-gly) formed during glutathione degradation. Also possesses beta lactamase activity and hydrolytically inactivates beta-lactam antibiotics. In terms of biological role, independently of its dipeptidase activity, acts as an adhesion receptor for neutrophil recruitment from bloodstream into inflamed lungs and liver. This chain is Dipeptidase 1 (DPEP1), found in Sus scrofa (Pig).